Here is a 198-residue protein sequence, read N- to C-terminus: Transcriptional regulator GfcR (198 aa).

It belongs to the purine/pyrimidine phosphoribosyltransferase family. GfcR subfamily.

The polypeptide is Transcriptional regulator GfcR (Methanospirillum hungatei JF-1 (strain ATCC 27890 / DSM 864 / NBRC 100397 / JF-1)).